A 259-amino-acid chain; its full sequence is Acetylglutamate kinase (259 aa).

Substrate is bound by residues 46 to 47 (GG), Arg-68, and Asn-162.

This sequence belongs to the acetylglutamate kinase family. ArgB subfamily.

It localises to the cytoplasm. The catalysed reaction is N-acetyl-L-glutamate + ATP = N-acetyl-L-glutamyl 5-phosphate + ADP. It functions in the pathway amino-acid biosynthesis; L-arginine biosynthesis; N(2)-acetyl-L-ornithine from L-glutamate: step 2/4. Its function is as follows. Catalyzes the ATP-dependent phosphorylation of N-acetyl-L-glutamate. The polypeptide is Acetylglutamate kinase (Roseiflexus castenholzii (strain DSM 13941 / HLO8)).